The following is a 743-amino-acid chain: Dystrobrevin alpha (743 aa).

Positions 1–288 (MIEDSGKRGN…SHSNQHQMKE (288 aa)) are interaction with MAGEE1. The ZZ-type zinc-finger motif lies at 238-294 (FHPVECSYCHSESMMGFRYRCQQCHNYQLCQDCFWRGHAGGSHSNQHQMKEYTSWKS). 8 residues coordinate Zn(2+): cysteine 243, cysteine 246, cysteine 258, cysteine 261, cysteine 267, cysteine 270, histidine 280, and histidine 284. The interval 400 to 450 (DRLADEHVLIGLYVNMLRNNPSCMLESSNRLDEEHRLIARYAARLAAESSS) is syntrophin-binding region. Positions 461 to 556 (DISFTIDANK…EGLMKLLKTQ (96 aa)) form a coiled coil. The segment at 556-575 (QGAGSPRSSPSHTISRPIPM) is disordered. The span at 557–569 (GAGSPRSSPSHTI) shows a compositional bias: polar residues. At serine 662 the chain carries Phosphoserine.

The protein belongs to the dystrophin family. Dystrobrevin subfamily. As to quaternary structure, interacts with dystrophin, utrophin and the syntrophins SNTA1, SNTB1, SNTB2, SNTG1 and SNTG2. Interacts with MAGEE1. Binds dystrobrevin binding protein 1. Interacts with CTNNAL1. The interaction is required for correct localization of both CTNNAL1 and DTNA. Does not interact with dystrophin. Phosphorylation of DTN-1 on tyrosine kinase substrate domain present in the C-terminus. As to expression, highly expressed in brain, skeletal and cardiac muscles, and expressed at lower levels in lung, liver and pancreas. Isoform 2 is not expressed in cardiac muscle. Isoform 7 and isoform 8 are only expressed in muscle.

It is found in the cytoplasm. Its subcellular location is the synapse. The protein resides in the cell membrane. Functionally, may be involved in the formation and stability of synapses as well as being involved in the clustering of nicotinic acetylcholine receptors. The chain is Dystrobrevin alpha from Homo sapiens (Human).